A 467-amino-acid chain; its full sequence is Thiohydroximate-O-sulfate sulfur/sulfate-lyase (nitrile-forming) NSP3 (467 aa).

One can recognise a Jacalin-type lectin domain in the interval 2–143 (AQKLVAQGGE…LHSLGAYVSL (142 aa)). Kelch repeat units follow at residues 177–225 (KIYS…VRMV), 230–276 (TLYT…SMAA), 280–329 (NVYV…VVQG), 331–375 (VWIV…ASAA), and 379–434 (HIVI…ASTT). Arginine 237 acts as the Proton donor in catalysis. Arginine 237, serine 270, arginine 292, glycine 321, and valine 370 together coordinate a (Z)-N-(sulfonatooxy)alkanimidothioate. Arginine 292 functions as the Proton donor in the catalytic mechanism. Fe(2+) is bound by residues glutamate 386, aspartate 390, and histidine 394. A (Z)-N-(sulfonatooxy)alkanimidothioate is bound at residue tryptophan 429.

Belongs to the jacalin lectin family. It depends on Fe(2+) as a cofactor. In terms of tissue distribution, mainly expressed in roots, and, at low levels, in seedlings and leaves. Observed in seeds.

The enzyme catalyses a (Z)-N-(sulfonatooxy)alkanimidothioate = a nitrile + sulfur + sulfate. The catalysed reaction is (Z)-phenyl-N-(sulfonatooxy)methanimidothioate = phenylacetonitrile + sulfur + sulfate. It carries out the reaction (Z)-N-(sulfonatooxy)prop-2-enimidothioate = but-3-enenitrile + sulfur + sulfate. In terms of biological role, specifier protein responsible for constitutive and herbivore-induced simple nitrile formation, especially in roots. Promotes simple nitriles, but not epithionitrile or thiocyanate formation. Converts allylglucosinolate and benzylglucosinolate (glucotropaeolin) to their corresponding simple nitriles in the presence of myrosinase. In Arabidopsis thaliana (Mouse-ear cress), this protein is Thiohydroximate-O-sulfate sulfur/sulfate-lyase (nitrile-forming) NSP3.